A 381-amino-acid polypeptide reads, in one-letter code: Succinyl-diaminopimelate desuccinylase (381 aa).

His68 lines the Zn(2+) pocket. Asp70 is an active-site residue. Asp101 contributes to the Zn(2+) binding site. Glu135 acts as the Proton acceptor in catalysis. Zn(2+)-binding residues include Glu136, Glu164, and His350.

The protein belongs to the peptidase M20A family. DapE subfamily. In terms of assembly, homodimer. It depends on Zn(2+) as a cofactor. Co(2+) is required as a cofactor.

The enzyme catalyses N-succinyl-(2S,6S)-2,6-diaminopimelate + H2O = (2S,6S)-2,6-diaminopimelate + succinate. The protein operates within amino-acid biosynthesis; L-lysine biosynthesis via DAP pathway; LL-2,6-diaminopimelate from (S)-tetrahydrodipicolinate (succinylase route): step 3/3. Catalyzes the hydrolysis of N-succinyl-L,L-diaminopimelic acid (SDAP), forming succinate and LL-2,6-diaminopimelate (DAP), an intermediate involved in the bacterial biosynthesis of lysine and meso-diaminopimelic acid, an essential component of bacterial cell walls. This Neisseria meningitidis serogroup C (strain 053442) protein is Succinyl-diaminopimelate desuccinylase.